A 328-amino-acid polypeptide reads, in one-letter code: Tetraacyldisaccharide 4'-kinase (328 aa).

52–59 provides a ligand contact to ATP; sequence NAGGTGKT.

Belongs to the LpxK family.

The catalysed reaction is a lipid A disaccharide + ATP = a lipid IVA + ADP + H(+). The protein operates within glycolipid biosynthesis; lipid IV(A) biosynthesis; lipid IV(A) from (3R)-3-hydroxytetradecanoyl-[acyl-carrier-protein] and UDP-N-acetyl-alpha-D-glucosamine: step 6/6. Functionally, transfers the gamma-phosphate of ATP to the 4'-position of a tetraacyldisaccharide 1-phosphate intermediate (termed DS-1-P) to form tetraacyldisaccharide 1,4'-bis-phosphate (lipid IVA). The polypeptide is Tetraacyldisaccharide 4'-kinase (Jannaschia sp. (strain CCS1)).